The primary structure comprises 192 residues: Fe/S biogenesis protein NfuA (192 aa).

Positions 149 and 152 each coordinate [4Fe-4S] cluster.

The protein belongs to the NfuA family. As to quaternary structure, homodimer. It depends on [4Fe-4S] cluster as a cofactor.

Its function is as follows. Involved in iron-sulfur cluster biogenesis. Binds a 4Fe-4S cluster, can transfer this cluster to apoproteins, and thereby intervenes in the maturation of Fe/S proteins. Could also act as a scaffold/chaperone for damaged Fe/S proteins. This chain is Fe/S biogenesis protein NfuA, found in Shewanella denitrificans (strain OS217 / ATCC BAA-1090 / DSM 15013).